A 212-amino-acid chain; its full sequence is Putative 3-methyladenine DNA glycosylase (212 aa).

This sequence belongs to the DNA glycosylase MPG family.

The protein is Putative 3-methyladenine DNA glycosylase of Nocardia farcinica (strain IFM 10152).